We begin with the raw amino-acid sequence, 406 residues long: COP9 signalosome complex subunit 4 (406 aa).

Ala-2 carries the post-translational modification N-acetylalanine. Lys-25 carries the N6-acetyllysine modification. One can recognise a PCI domain in the interval 197-366 (YRRKFIEAAQ…GIVHFETREA (170 aa)).

Belongs to the CSN4 family. In terms of assembly, component of the CSN complex, composed of COPS1/GPS1, COPS2, COPS3, COPS4, COPS5, COPS6, COPS7 (COPS7A or COPS7B), COPS8 and COPS9. In the complex, it probably interacts directly with COPS1, COPS2, COPS3, COPS5, COPS6, COPS7 (COPS7A or COPS7B) and COPS8. Interacts with TOR1A; the interaction is direct and associates TOR1A and SNAPIN with the CSN complex. Interacts with STON2; controls STON2 neddylation levels. Interacts with ERCC6.

The protein localises to the cytoplasm. Its subcellular location is the nucleus. It is found in the cytoplasmic vesicle. It localises to the secretory vesicle. The protein resides in the synaptic vesicle. In terms of biological role, component of the COP9 signalosome complex (CSN), a complex involved in various cellular and developmental processes. The CSN complex is an essential regulator of the ubiquitin (Ubl) conjugation pathway by mediating the deneddylation of the cullin subunits of SCF-type E3 ligase complexes, leading to decrease the Ubl ligase activity of SCF-type complexes such as SCF, CSA or DDB2. Also involved in the deneddylation of non-cullin subunits such as STON2. The complex is also involved in phosphorylation of p53/TP53, c-jun/JUN, IkappaBalpha/NFKBIA, ITPK1, IRF8/ICSBP and SNAPIN, possibly via its association with CK2 and PKD kinases. CSN-dependent phosphorylation of TP53 and JUN promotes and protects degradation by the Ubl system, respectively. In Rattus norvegicus (Rat), this protein is COP9 signalosome complex subunit 4 (Cops4).